The chain runs to 300 residues: Cation-efflux pump FieF (300 aa).

4 helical membrane-spanning segments follow: residues 12–32, 40–60, 82–102, and 114–134; these read AALA…VAWY, LAAL…LLVV, AALA…LTGF, and PGVG…LVTY. Residues aspartate 45 and aspartate 49 each contribute to the Zn(2+) site. Histidine 153 and aspartate 157 together coordinate Zn(2+). 2 consecutive transmembrane segments (helical) span residues 155–175 and 178–198; these read QSDV…WYGF and ADAL…LRMG.

It belongs to the cation diffusion facilitator (CDF) transporter (TC 2.A.4) family. FieF subfamily. Homodimer.

It is found in the cell inner membrane. It catalyses the reaction Zn(2+)(in) + H(+)(out) = Zn(2+)(out) + H(+)(in). The catalysed reaction is Cd(2+)(in) + H(+)(out) = Cd(2+)(out) + H(+)(in). It carries out the reaction Fe(2+)(in) + H(+)(out) = Fe(2+)(out) + H(+)(in). In terms of biological role, divalent metal cation transporter which exports Zn(2+), Cd(2+) and possibly Fe(2+). May be involved in zinc and iron detoxification by efflux. In Serratia proteamaculans (strain 568), this protein is Cation-efflux pump FieF.